Consider the following 121-residue polypeptide: Small ribosomal subunit protein uS10 (121 aa).

The residue at position 2 (Ser-2) is an N-acetylserine. Residues Lys-6, Lys-8, Lys-21, Lys-32, and Lys-101 each participate in a glycyl lysine isopeptide (Lys-Gly) (interchain with G-Cter in ubiquitin) cross-link.

This sequence belongs to the universal ribosomal protein uS10 family. In terms of assembly, component of the small ribosomal subunit (SSU). Mature yeast ribosomes consist of a small (40S) and a large (60S) subunit. The 40S small subunit contains 1 molecule of ribosomal RNA (18S rRNA) and 33 different proteins (encoded by 57 genes). The large 60S subunit contains 3 rRNA molecules (25S, 5.8S and 5S rRNA) and 46 different proteins (encoded by 81 genes). Ubiquitinated at Lys-6 and Lys-8 by HEL2, to activate the ribosome quality control (RQC) pathway in response to stalled ribosomes. Post-translationally, N-terminally acetylated by acetyltransferase NatA. Also partially acetylated by NatC.

The protein localises to the cytoplasm. Functionally, component of the ribosome, a large ribonucleoprotein complex responsible for the synthesis of proteins in the cell. The small ribosomal subunit (SSU) binds messenger RNAs (mRNAs) and translates the encoded message by selecting cognate aminoacyl-transfer RNA (tRNA) molecules. The large subunit (LSU) contains the ribosomal catalytic site termed the peptidyl transferase center (PTC), which catalyzes the formation of peptide bonds, thereby polymerizing the amino acids delivered by tRNAs into a polypeptide chain. The nascent polypeptides leave the ribosome through a tunnel in the LSU and interact with protein factors that function in enzymatic processing, targeting, and the membrane insertion of nascent chains at the exit of the ribosomal tunnel. The chain is Small ribosomal subunit protein uS10 from Saccharomyces cerevisiae (strain ATCC 204508 / S288c) (Baker's yeast).